The following is a 154-amino-acid chain: 3-hydroxyacyl-[acyl-carrier-protein] dehydratase FabZ (154 aa).

The active site involves H54.

Belongs to the thioester dehydratase family. FabZ subfamily.

It is found in the cytoplasm. The enzyme catalyses a (3R)-hydroxyacyl-[ACP] = a (2E)-enoyl-[ACP] + H2O. Its function is as follows. Involved in unsaturated fatty acids biosynthesis. Catalyzes the dehydration of short chain beta-hydroxyacyl-ACPs and long chain saturated and unsaturated beta-hydroxyacyl-ACPs. The chain is 3-hydroxyacyl-[acyl-carrier-protein] dehydratase FabZ from Shewanella putrefaciens (strain CN-32 / ATCC BAA-453).